Reading from the N-terminus, the 387-residue chain is O-methyltransferase asqD (387 aa).

Aspartate 252 serves as a coordination point for S-adenosyl-L-methionine. The Proton acceptor role is filled by histidine 294.

It belongs to the class I-like SAM-binding methyltransferase superfamily. Cation-independent O-methyltransferase family.

The protein operates within secondary metabolite biosynthesis. Its pathway is alkaloid biosynthesis. It functions in the pathway mycotoxin biosynthesis. In terms of biological role, O-methyltransferase; part of the gene cluster that mediates the biosynthesis of the aspoquinolone mycotoxins. The role of asqD within the aspoquinolone pathway has still to be determined. The first step of the pathway is catalyzed by the nonribosomal peptide synthetase asqK that condenses anthranilic acid and O-methyl-L-tyrosine to produce 4'-methoxycyclopeptin. 4'-methoxycyclopeptin is then converted to 4'-methoxydehydrocyclopeptin by the ketoglutarate-dependent dioxygenase asqJ. AsqJ also converts its first product 4'-methoxydehydrocyclopeptin to 4'-methoxycyclopenin. The following conversion of 4'-methoxycyclopenin into 4'-methoxyviridicatin is catalyzed by the cyclopenase asqI. 4'-methoxyviridicatin is the precursor of quinolone natural products, and is further converted to quinolinone B. The prenyltransferase asqH1 then catalyzes the canonical Friedel-Crafts alkylation of quinolinone B with dimethylallyl cation to yield dimethylallyl quinolone, which is subjected to FAD-dependent dehydrogenation by the FAD-linked oxidoreductase asqF to yield conjugated aryl diene. The delta(3') double bond then serves as the site of the second alkylation with DMAPP catalyzed by the prenyltransferase asqH2 to yield a carbenium ion intermediate, which can be attacked by H(2)O to yield a styrenyl quinolone containing a C3'-hydroxyprenyl chain. The FAD-dependent monooxygenase asqG performs epoxidation of the terminal C7'-C8' olefin. Finally, after dehydratation of the epoxide at C3 by asqC, the quinolone epoxide rearrangement protein asqO catalyzes an enzymatic 3-exo-tet cyclization to yield the cyclopropyl-THF ring system in aspoquinolone. The chain is O-methyltransferase asqD from Emericella nidulans (strain FGSC A4 / ATCC 38163 / CBS 112.46 / NRRL 194 / M139) (Aspergillus nidulans).